We begin with the raw amino-acid sequence, 344 residues long: MYPLLFRTVLSRMDPEDAHHLASTAISLLPPSGLGWIARRLTAPDPSLAVDTLGLRFPSPFGVAAGFDKDARAVLGLGQLGFGHVEVGTVTAEAQPGNPRPRLFRLIEDRAVINRMGFNNGGAAALADRLRRLRTRRDRPVIGVNIGKTRVVAVEDAVADYVRTTRLVAPVADYLAVNVSSPNTPGLRGLQEIDLLRPLLTSIRDAADGVPVLVKIAPDLQDAEVERIAELATELGLAGVIATNTTLSRADLRTDAAVVEAAGAGGLSGAPLAPRALEVLRILRRVLPSDACIISVGGVDTADDVQSRLDAGATLVQGYTAFLYRGPLWARSINAGLARIRRPR.

FMN is bound by residues 65–69 and threonine 89; that span reads AGFDK. Position 69 (lysine 69) interacts with substrate. 114 to 118 lines the substrate pocket; it reads NRMGF. FMN contacts are provided by asparagine 145 and asparagine 178. Position 178 (asparagine 178) interacts with substrate. Residue serine 181 is the Nucleophile of the active site. Residue asparagine 183 coordinates substrate. The FMN site is built by lysine 215 and threonine 243. A substrate-binding site is contributed by 244–245; the sequence is NT. FMN-binding positions include glycine 269, glycine 298, and 319–320; that span reads YT.

It belongs to the dihydroorotate dehydrogenase family. Type 2 subfamily. Monomer. Requires FMN as cofactor.

It localises to the cell membrane. It catalyses the reaction (S)-dihydroorotate + a quinone = orotate + a quinol. Its pathway is pyrimidine metabolism; UMP biosynthesis via de novo pathway; orotate from (S)-dihydroorotate (quinone route): step 1/1. In terms of biological role, catalyzes the conversion of dihydroorotate to orotate with quinone as electron acceptor. This Clavibacter sepedonicus (Clavibacter michiganensis subsp. sepedonicus) protein is Dihydroorotate dehydrogenase (quinone).